The following is a 25-amino-acid chain: C-reactive protein P2 subunit 4 (25 aa).

Positions 1–25 (GRSLVFPEETANSFVELFPAKELSL) constitute a Pentraxin (PTX) domain.

It belongs to the pentraxin family. Heteropentamer. Discoid arrangement of 5 non-covalently bound subunits 1, 2, 3 and 4. It depends on Ca(2+) as a cofactor. Post-translationally, glycosylated.

The protein resides in the secreted. Functionally, displays several functions associated with host defense: it promotes agglutination, bacterial capsular swelling, phagocytosis, and complement fixation through its calcium-dependent binding to phosphorylcholine. In Gadus morhua (Atlantic cod), this protein is C-reactive protein P2 subunit 4.